The primary structure comprises 361 residues: Protein Wnt-2 (361 aa).

A signal peptide spans 1–27; sequence MNASVLGLCLSGPLVLLLAWLAPPVTS. 11 disulfides stabilise this stretch: C77–C88, C128–C136, C138–C158, C207–C221, C209–C216, C279–C310, C295–C305, C309–C349, C325–C340, C327–C337, and C332–C333. The O-palmitoleoyl serine; by PORCN moiety is linked to residue S213. Residue N296 is glycosylated (N-linked (GlcNAc...) asparagine).

This sequence belongs to the Wnt family. Post-translationally, palmitoleoylation is required for efficient binding to frizzled receptors. Depalmitoleoylation leads to Wnt signaling pathway inhibition.

It localises to the secreted. Its subcellular location is the extracellular space. The protein resides in the extracellular matrix. Functionally, ligand for members of the frizzled family of seven transmembrane receptors. Probable developmental protein. May be a signaling molecule which affects the development of discrete regions of tissues. Is likely to signal over only few cell diameters. The polypeptide is Protein Wnt-2 (WNT2) (Ornithorhynchus anatinus (Duckbill platypus)).